The sequence spans 197 residues: Recombination protein RecR (197 aa).

The C4-type zinc-finger motif lies at 57-72; it reads CSVCFAITEDDPCWIC. Positions 79–174 constitute a Toprim domain; that stretch reads GTICVVEEPQ…KVTRLAHGIP (96 aa).

Belongs to the RecR family.

Functionally, may play a role in DNA repair. It seems to be involved in an RecBC-independent recombinational process of DNA repair. It may act with RecF and RecO. The protein is Recombination protein RecR of Geobacter sp. (strain M21).